The chain runs to 292 residues: Short chain dehydrogenase mpl6 (292 aa).

Residues Val-37, Asp-95, Asn-122, Arg-156, Tyr-188, Lys-192, Val-221, and Thr-223 each contribute to the NADP(+) site. Tyr-188 (proton donor) is an active-site residue. The active-site Lowers pKa of active site Tyr is Lys-192.

Belongs to the short-chain dehydrogenases/reductases (SDR) family.

Its pathway is mycotoxin biosynthesis. Its function is as follows. Short chain dehydrogenase; part of the gene cluster that mediates the biosynthesis of the mycotoxin citrinin, a hepato-nephrotoxic compound to humans due to inhibition of respiration complex III. The pathway begins with the synthesis of a keto-aldehyde intermediate by the citrinin PKS (pksCT) from successive condensations of 4 malonyl-CoA units, presumably with a simple acetyl-CoA starter unit. Release of the keto-aldehyde intermediate is consistent with the presence of the C-terminal reductive release domain. Mp11 collaborates with pksCT by catalyzing the hydrolysis of ACP-bound acyl intermediates to free the ACP from stalled intermediates. Mpl2 then catalyzes the oxidation of the C-12 methyl of the ketone intermediate to an alcohol intermediate which is further oxidized by the oxidoreductase mpl7 to produce a bisaldehyde intermediate. The fourth catalytic step is catalyzed by the mpl4 aldehyde dehydrogenase. The final transformation is the reduction of C-3 by mpl6 to provide the chemically stable citrinin nucleus. The protein is Short chain dehydrogenase mpl6 of Monascus purpureus (Red mold).